Consider the following 394-residue polypeptide: Elongation factor Tu 1 (394 aa).

The tr-type G domain maps to 10-204; it reads KPHVNVGTIG…ALDSYIPQPE (195 aa). Residues 19-26 are G1; the sequence is GHVDHGKT. 19 to 26 contacts GTP; sequence GHVDHGKT. Residue Thr-26 coordinates Mg(2+). Residues 60 to 64 are G2; the sequence is GITIN. Positions 81-84 are G3; that stretch reads DCPG. Residues 81–85 and 136–139 each bind GTP; these read DCPGH and NKCD. The tract at residues 136-139 is G4; that stretch reads NKCD. The tract at residues 174–176 is G5; it reads SAL.

The protein belongs to the TRAFAC class translation factor GTPase superfamily. Classic translation factor GTPase family. EF-Tu/EF-1A subfamily. In terms of assembly, monomer.

The protein localises to the cytoplasm. The enzyme catalyses GTP + H2O = GDP + phosphate + H(+). Functionally, GTP hydrolase that promotes the GTP-dependent binding of aminoacyl-tRNA to the A-site of ribosomes during protein biosynthesis. The chain is Elongation factor Tu 1 from Yersinia pestis bv. Antiqua (strain Nepal516).